The primary structure comprises 692 residues: Pentatricopeptide repeat-containing protein At2g04860 (692 aa).

PPR repeat units follow at residues 12–46 (DLSY…SLTP), 47–83 (NHFT…GLDR), 84–114 (FVYV…MPER), 115–149 (DTVV…GFSP), 150–184 (SATT…GLEL), 185–215 (DSQV…MKDK), 216–250 (STVS…NVEI), 280–314 (DISV…SIVG), 316–345 (TSIV…CMKI), 346–380 (DAVA…GLCT), 381–411 (KTLV…LQET), 412–447 (PLIS…GLLP), 448–482 (DAIT…NFEN), 483–513 (ENFV…IKAP), 514–548 (CTAT…GLKP), 549–584 (DEIT…GISP), and 585–615 (TLQH…MDIK). Residues 620-692 (VWGALLSACI…YDGYLGVSQI (73 aa)) are type E motif; degenerate.

This sequence belongs to the PPR family. PCMP-E subfamily.

This chain is Pentatricopeptide repeat-containing protein At2g04860 (PCMP-E74), found in Arabidopsis thaliana (Mouse-ear cress).